We begin with the raw amino-acid sequence, 510 residues long: Aspartate kinase FUB3 (510 aa).

ACT domains lie at 372-440 (ILSN…VLPD) and 446-510 (LVGA…KNAI).

Belongs to the aspartokinase family.

It carries out the reaction L-aspartate + ATP = 4-phospho-L-aspartate + ADP. It participates in mycotoxin biosynthesis. Aspartate kinase; part of the gene cluster that mediates the biosynthesis of fusaric acid, a mycotoxin with low to moderate toxicity to animals and humans, but with high phytotoxic properties. L-aspartate is suggested as fusaric acid amino acid precursor that is activated and further processed to O-acetyl-L-homoserine by cluster enzymes aspartate kinase FUB3 and homoserine O-acetyltransferase FUB5, as well as enzymes of the primary metabolism. The polyketide synthase (PKS) FUB1 generates the triketide trans-2-hexenal which is presumptively released by the hydrolase FUB4 and linked to the NRPS-bound amino acid precursor by NAD(P)-dependent dehydrogenase FUB6. FUB1, FUB4, and the non-canonical NRPS Fub8 may form an enzyme complex. Further processing of the NRPS-bound intermediate might be carried out by FUB6 and the sulfhydrylase FUB7, enabling a spontaneous electrocyclization to close the carbon backbone of fusaric acid. Dihydrofusaric acid is likely to be released via reduction by the thioester reductase (TR) domain of FUB8 whereupon the final oxidation to fusaric acid may (also) be performed by the FMN-dependent dehydrogenase FUB9. The polypeptide is Aspartate kinase FUB3 (Gibberella fujikuroi (strain CBS 195.34 / IMI 58289 / NRRL A-6831) (Bakanae and foot rot disease fungus)).